A 107-amino-acid chain; its full sequence is MMKGGIAGLMKQAQQMQENMKKMQDQLASVEVEGQSGAGMVKVLMTCKYDVRRVTIDDSVMDDKEMLEDLLAAAVNDAVRRVETTTQEKMAGFTSGLNLPPGMKLPF.

It belongs to the YbaB/EbfC family. As to quaternary structure, homodimer.

It localises to the cytoplasm. The protein resides in the nucleoid. Functionally, binds to DNA and alters its conformation. May be involved in regulation of gene expression, nucleoid organization and DNA protection. The chain is Nucleoid-associated protein AZOSEA06390 from Aromatoleum aromaticum (strain DSM 19018 / LMG 30748 / EbN1) (Azoarcus sp. (strain EbN1)).